The primary structure comprises 160 residues: Protein cornichon homolog 2 (160 aa).

Over 1–10 the chain is Cytoplasmic; the sequence is MAFTFAAFCY. A helical membrane pass occupies residues 11–31; sequence MLTLVLCAALIFFVIWQIIAF. Residues 32–72 lie on the Lumenal side of the membrane; sequence DELRTDFKNPIDQSNPTRARERILNIERICNLLRRLVVPEY. Residues 73-93 traverse the membrane as a helical segment; it reads SIHGLFCLMFMCAGEWVTLGL. At 94 to 138 the chain is on the cytoplasmic side; that stretch reads NIPLLLYHLWRFFHRPADGSEVMYDPVSVMNADILNYCQKESWCK. The helical transmembrane segment at 139 to 159 threads the bilayer; sequence LGFYLLSFFYYLYSMVYALVS. Phe160 is a topological domain (lumenal).

It belongs to the cornichon family.

It is found in the membrane. In terms of biological role, regulates the trafficking and gating properties of AMPA-selective glutamate receptors (AMPARs). This Danio rerio (Zebrafish) protein is Protein cornichon homolog 2 (cnih2).